Here is a 94-residue protein sequence, read N- to C-terminus: Pyrimidine/purine nucleoside phosphorylase (94 aa).

This sequence belongs to the nucleoside phosphorylase PpnP family.

It catalyses the reaction a purine D-ribonucleoside + phosphate = a purine nucleobase + alpha-D-ribose 1-phosphate. It carries out the reaction adenosine + phosphate = alpha-D-ribose 1-phosphate + adenine. The enzyme catalyses cytidine + phosphate = cytosine + alpha-D-ribose 1-phosphate. The catalysed reaction is guanosine + phosphate = alpha-D-ribose 1-phosphate + guanine. It catalyses the reaction inosine + phosphate = alpha-D-ribose 1-phosphate + hypoxanthine. It carries out the reaction thymidine + phosphate = 2-deoxy-alpha-D-ribose 1-phosphate + thymine. The enzyme catalyses uridine + phosphate = alpha-D-ribose 1-phosphate + uracil. The catalysed reaction is xanthosine + phosphate = alpha-D-ribose 1-phosphate + xanthine. Catalyzes the phosphorolysis of diverse nucleosides, yielding D-ribose 1-phosphate and the respective free bases. Can use uridine, adenosine, guanosine, cytidine, thymidine, inosine and xanthosine as substrates. Also catalyzes the reverse reactions. In Pseudomonas putida (strain GB-1), this protein is Pyrimidine/purine nucleoside phosphorylase.